A 523-amino-acid polypeptide reads, in one-letter code: Bifunctional purine biosynthesis protein PurH (523 aa).

An MGS-like domain is found at 1 to 145 (MIKQALLSVS…KNHRDVTVIV (145 aa)).

Belongs to the PurH family.

It carries out the reaction (6R)-10-formyltetrahydrofolate + 5-amino-1-(5-phospho-beta-D-ribosyl)imidazole-4-carboxamide = 5-formamido-1-(5-phospho-D-ribosyl)imidazole-4-carboxamide + (6S)-5,6,7,8-tetrahydrofolate. The enzyme catalyses IMP + H2O = 5-formamido-1-(5-phospho-D-ribosyl)imidazole-4-carboxamide. The protein operates within purine metabolism; IMP biosynthesis via de novo pathway; 5-formamido-1-(5-phospho-D-ribosyl)imidazole-4-carboxamide from 5-amino-1-(5-phospho-D-ribosyl)imidazole-4-carboxamide (10-formyl THF route): step 1/1. Its pathway is purine metabolism; IMP biosynthesis via de novo pathway; IMP from 5-formamido-1-(5-phospho-D-ribosyl)imidazole-4-carboxamide: step 1/1. The sequence is that of Bifunctional purine biosynthesis protein PurH from Cupriavidus pinatubonensis (strain JMP 134 / LMG 1197) (Cupriavidus necator (strain JMP 134)).